The sequence spans 119 residues: Ubiquinone biosynthesis accessory factor UbiK (119 aa).

The stretch at 79-99 (LLRTREKLALLEQRLSELEAR) forms a coiled coil. A compositionally biased stretch (basic and acidic residues) spans 96–106 (LEARDKPEEVK). The interval 96 to 119 (LEARDKPEEVKPAPAIPPVDPQQE) is disordered. The span at 109-119 (PAIPPVDPQQE) shows a compositional bias: pro residues.

This sequence belongs to the UbiK family. In terms of assembly, homotrimer.

The protein resides in the cytoplasm. The protein operates within cofactor biosynthesis; ubiquinone biosynthesis. Its function is as follows. Required for efficient ubiquinone (coenzyme Q) biosynthesis under aerobic conditions. UbiK is probably an accessory factor of Ubi enzymes and facilitates ubiquinone biosynthesis by acting as an assembly factor, a targeting factor, or both. Dispensable for ubiquinone biosynthesis under anaerobiosis. Required for proliferation in macrophages and virulence in mice. Significantly contributes to colonization and invasion as well as host inflammation and innate immunity after infection. In vitro, has membrane fusogenic activity at acidic pH. The protein is Ubiquinone biosynthesis accessory factor UbiK of Salmonella typhimurium (strain LT2 / SGSC1412 / ATCC 700720).